The sequence spans 423 residues: Core protease OPG083 (423 aa).

Catalysis depends on residues His-241, Asp-248, and Cys-328.

Belongs to the peptidase C57 family.

The protein resides in the virion. Late protein responsible for processing most or all of the viral core and membrane proteins known to undergo morphogenesis-associated proteolysis. These proteolytic events are involved in the transformation of immature virions (IV) into mature virions (MV). Probably cleaves at least the OPG129/A3, OPG136/A10, OPG098/L4, and OPG144/A17 precursors preferentially at Ala-Gly-|-Ala motifs. Also seems to process Ala-Gly-|-Ser and Ala-Gly-|-Thr motifs. In Bos taurus (Bovine), this protein is Core protease OPG083 (OPG083).